The sequence spans 1355 residues: DNA-directed RNA polymerase subunit beta' (1355 aa).

Zn(2+)-binding residues include Cys219, Cys293, Cys300, and Cys303. The segment at 1331 to 1355 (AEVEVDDEVDDDYEDDDEDDDDYED) is disordered.

It belongs to the RNA polymerase beta' chain family. RpoC2 subfamily. In terms of assembly, in cyanobacteria the RNAP catalytic core is composed of 2 alpha, 1 beta, 1 beta', 1 gamma and 1 omega subunit. When a sigma factor is associated with the core the holoenzyme is formed, which can initiate transcription. It depends on Zn(2+) as a cofactor.

It catalyses the reaction RNA(n) + a ribonucleoside 5'-triphosphate = RNA(n+1) + diphosphate. DNA-dependent RNA polymerase catalyzes the transcription of DNA into RNA using the four ribonucleoside triphosphates as substrates. The polypeptide is DNA-directed RNA polymerase subunit beta' (Trichormus variabilis (strain ATCC 29413 / PCC 7937) (Anabaena variabilis)).